Consider the following 356-residue polypeptide: DNA polymerase IV (356 aa).

Residues 7–187 (IIHVDMDAFY…LPVNRVPGVG (181 aa)) form the UmuC domain. 2 residues coordinate Mg(2+): D11 and D105. Residue E106 is part of the active site.

Belongs to the DNA polymerase type-Y family. In terms of assembly, monomer. Mg(2+) is required as a cofactor.

Its subcellular location is the cytoplasm. It catalyses the reaction DNA(n) + a 2'-deoxyribonucleoside 5'-triphosphate = DNA(n+1) + diphosphate. Poorly processive, error-prone DNA polymerase involved in untargeted mutagenesis. Copies undamaged DNA at stalled replication forks, which arise in vivo from mismatched or misaligned primer ends. These misaligned primers can be extended by PolIV. Exhibits no 3'-5' exonuclease (proofreading) activity. May be involved in translesional synthesis, in conjunction with the beta clamp from PolIII. In Stenotrophomonas maltophilia (strain R551-3), this protein is DNA polymerase IV.